The following is a 189-amino-acid chain: Glutathione-dependent formaldehyde-activating enzyme (189 aa).

Residues 20–166 enclose the CENP-V/GFA domain; the sequence is FAGGTLVCAC…LRTIGLEPYD (147 aa). Residues Cys-27, Cys-29, Cys-48, Cys-50, Cys-53, Cys-95, and Cys-98 each coordinate Zn(2+).

Belongs to the Gfa family. It depends on Zn(2+) as a cofactor.

It catalyses the reaction S-(hydroxymethyl)glutathione = glutathione + formaldehyde. It functions in the pathway one-carbon metabolism; formaldehyde degradation; formate from formaldehyde (glutathione route): step 1/3. In terms of biological role, catalyzes the condensation of formaldehyde and glutathione to S-hydroxymethylglutathione. This Mesorhizobium japonicum (strain LMG 29417 / CECT 9101 / MAFF 303099) (Mesorhizobium loti (strain MAFF 303099)) protein is Glutathione-dependent formaldehyde-activating enzyme.